Consider the following 450-residue polypeptide: Exodeoxyribonuclease 7 large subunit (450 aa).

This sequence belongs to the XseA family. In terms of assembly, heterooligomer composed of large and small subunits.

It is found in the cytoplasm. The catalysed reaction is Exonucleolytic cleavage in either 5'- to 3'- or 3'- to 5'-direction to yield nucleoside 5'-phosphates.. In terms of biological role, bidirectionally degrades single-stranded DNA into large acid-insoluble oligonucleotides, which are then degraded further into small acid-soluble oligonucleotides. In Listeria monocytogenes serovar 1/2a (strain ATCC BAA-679 / EGD-e), this protein is Exodeoxyribonuclease 7 large subunit.